We begin with the raw amino-acid sequence, 426 residues long: Glutamate-1-semialdehyde 2,1-aminomutase (426 aa).

K265 bears the N6-(pyridoxal phosphate)lysine mark.

Belongs to the class-III pyridoxal-phosphate-dependent aminotransferase family. HemL subfamily. In terms of assembly, homodimer. Pyridoxal 5'-phosphate serves as cofactor.

It localises to the cytoplasm. It catalyses the reaction (S)-4-amino-5-oxopentanoate = 5-aminolevulinate. Its pathway is porphyrin-containing compound metabolism; protoporphyrin-IX biosynthesis; 5-aminolevulinate from L-glutamyl-tRNA(Glu): step 2/2. This chain is Glutamate-1-semialdehyde 2,1-aminomutase, found in Shigella sonnei (strain Ss046).